The sequence spans 281 residues: Phosphonates import ATP-binding protein PhnC (281 aa).

Residues Phe-2 to Lys-245 enclose the ABC transporter domain. Gly-34–Ser-41 contacts ATP.

This sequence belongs to the ABC transporter superfamily. Phosphonates importer (TC 3.A.1.9.1) family. The complex is composed of two ATP-binding proteins (PhnC), two transmembrane proteins (PhnE) and a solute-binding protein (PhnD).

It is found in the cell inner membrane. It catalyses the reaction phosphonate(out) + ATP + H2O = phosphonate(in) + ADP + phosphate + H(+). Its function is as follows. Part of the ABC transporter complex PhnCDE involved in phosphonates import. Responsible for energy coupling to the transport system. The polypeptide is Phosphonates import ATP-binding protein PhnC (Rhizobium etli (strain ATCC 51251 / DSM 11541 / JCM 21823 / NBRC 15573 / CFN 42)).